The chain runs to 187 residues: High-affinity copper transporter ctrA2 (187 aa).

2 consecutive transmembrane segments (helical) span residues 44–64 (YAGT…LVAF) and 137–157 (AAIF…VMTM).

It belongs to the copper transporter (Ctr) (TC 1.A.56) family. SLC31A subfamily.

It localises to the cell membrane. The enzyme catalyses Cu(2+)(in) = Cu(2+)(out). Its function is as follows. High-affinity copper transporter of plasma membrane that mediates copper uptake under low copper conditions. The mechanism driving the transmembrane transport of copper has still to be determined. Acts as a potential virulence factor. This is High-affinity copper transporter ctrA2 from Aspergillus fumigatus (strain ATCC MYA-4609 / CBS 101355 / FGSC A1100 / Af293) (Neosartorya fumigata).